The chain runs to 201 residues: LexA repressor 1 (201 aa).

The segment at residues 27 to 47 (LAEIAQAFGFASRNAAQKHVQ) is a DNA-binding region (H-T-H motif). Residues serine 122 and lysine 159 each act as for autocatalytic cleavage activity in the active site.

This sequence belongs to the peptidase S24 family. Homodimer.

It carries out the reaction Hydrolysis of Ala-|-Gly bond in repressor LexA.. In terms of biological role, represses a number of genes involved in the response to DNA damage (SOS response), including recA and lexA. In the presence of single-stranded DNA, RecA interacts with LexA causing an autocatalytic cleavage which disrupts the DNA-binding part of LexA, leading to derepression of the SOS regulon and eventually DNA repair. This Xanthomonas axonopodis pv. citri (strain 306) protein is LexA repressor 1.